A 227-amino-acid polypeptide reads, in one-letter code: RNA-free ribonuclease P (227 aa).

It belongs to the HARP family.

The enzyme catalyses Endonucleolytic cleavage of RNA, removing 5'-extranucleotides from tRNA precursor.. Its function is as follows. RNA-free RNase P that catalyzes the removal of the 5'-leader sequence from pre-tRNA to produce the mature 5'-terminus. This chain is RNA-free ribonuclease P, found in Archaeoglobus fulgidus (strain ATCC 49558 / DSM 4304 / JCM 9628 / NBRC 100126 / VC-16).